The primary structure comprises 426 residues: Serine--tRNA ligase (426 aa).

233–235 (TAE) serves as a coordination point for L-serine. 264–266 (RSE) contributes to the ATP binding site. Glu-287 contributes to the L-serine binding site. An ATP-binding site is contributed by 351-354 (EISS). Residue Ser-387 coordinates L-serine.

The protein belongs to the class-II aminoacyl-tRNA synthetase family. Type-1 seryl-tRNA synthetase subfamily. Homodimer. The tRNA molecule binds across the dimer.

Its subcellular location is the cytoplasm. The enzyme catalyses tRNA(Ser) + L-serine + ATP = L-seryl-tRNA(Ser) + AMP + diphosphate + H(+). It catalyses the reaction tRNA(Sec) + L-serine + ATP = L-seryl-tRNA(Sec) + AMP + diphosphate + H(+). Its pathway is aminoacyl-tRNA biosynthesis; selenocysteinyl-tRNA(Sec) biosynthesis; L-seryl-tRNA(Sec) from L-serine and tRNA(Sec): step 1/1. Catalyzes the attachment of serine to tRNA(Ser). Is also able to aminoacylate tRNA(Sec) with serine, to form the misacylated tRNA L-seryl-tRNA(Sec), which will be further converted into selenocysteinyl-tRNA(Sec). This Clostridium botulinum (strain Hall / ATCC 3502 / NCTC 13319 / Type A) protein is Serine--tRNA ligase.